The primary structure comprises 302 residues: Sulfate adenylyltransferase subunit 2 (302 aa).

This sequence belongs to the PAPS reductase family. CysD subfamily. Heterodimer composed of CysD, the smaller subunit, and CysN.

The enzyme catalyses sulfate + ATP + H(+) = adenosine 5'-phosphosulfate + diphosphate. It participates in sulfur metabolism; hydrogen sulfide biosynthesis; sulfite from sulfate: step 1/3. Functionally, with CysN forms the ATP sulfurylase (ATPS) that catalyzes the adenylation of sulfate producing adenosine 5'-phosphosulfate (APS) and diphosphate, the first enzymatic step in sulfur assimilation pathway. APS synthesis involves the formation of a high-energy phosphoric-sulfuric acid anhydride bond driven by GTP hydrolysis by CysN coupled to ATP hydrolysis by CysD. This Serratia proteamaculans (strain 568) protein is Sulfate adenylyltransferase subunit 2.